A 157-amino-acid polypeptide reads, in one-letter code: MNPKVPMTLEGAQQLKEELKRRKTTDRKRIIAAIEEARAHGDLSENAEYHAAKEQQSFNEGRIAKLEGMLASAEVIDTSRLNSSRIVFGAKVTVIDEDTEEESTYHIVGDEEADLEKGKISISSPMARGMIGKEAGDSIEVRAPGGTRHFEVVEITF.

Residues 9 to 30 (LEGAQQLKEELKRRKTTDRKRI) adopt a coiled-coil conformation.

Belongs to the GreA/GreB family.

Necessary for efficient RNA polymerase transcription elongation past template-encoded arresting sites. The arresting sites in DNA have the property of trapping a certain fraction of elongating RNA polymerases that pass through, resulting in locked ternary complexes. Cleavage of the nascent transcript by cleavage factors such as GreA or GreB allows the resumption of elongation from the new 3'terminus. GreA releases sequences of 2 to 3 nucleotides. The sequence is that of Transcription elongation factor GreA from Magnetococcus marinus (strain ATCC BAA-1437 / JCM 17883 / MC-1).